Reading from the N-terminus, the 179-residue chain is ATP-dependent protease subunit HslV (179 aa).

Threonine 7 is an active-site residue. Na(+) is bound by residues glycine 162, cysteine 165, and threonine 168.

It belongs to the peptidase T1B family. HslV subfamily. A double ring-shaped homohexamer of HslV is capped on each side by a ring-shaped HslU homohexamer. The assembly of the HslU/HslV complex is dependent on binding of ATP.

The protein localises to the cytoplasm. The enzyme catalyses ATP-dependent cleavage of peptide bonds with broad specificity.. Allosterically activated by HslU binding. Protease subunit of a proteasome-like degradation complex believed to be a general protein degrading machinery. This chain is ATP-dependent protease subunit HslV, found in Bordetella avium (strain 197N).